Consider the following 193-residue polypeptide: Acyl-homoserine-lactone synthase (193 aa).

Belongs to the autoinducer synthase family.

The catalysed reaction is a fatty acyl-[ACP] + S-adenosyl-L-methionine = an N-acyl-L-homoserine lactone + S-methyl-5'-thioadenosine + holo-[ACP] + H(+). In terms of biological role, required for the synthesis of N-(3-oxodecanoyl)-L-homoserine lactone (ODHL), an autoinducer molecule which binds to VanR. This Vibrio anguillarum (Listonella anguillarum) protein is Acyl-homoserine-lactone synthase (vanI).